We begin with the raw amino-acid sequence, 188 residues long: Archaemetzincin (188 aa).

His-137 serves as a coordination point for Zn(2+). The active-site Proton acceptor is the Glu-138. The Zn(2+) site is built by His-141, His-147, Cys-148, Cys-153, Cys-172, and Cys-175.

The protein belongs to the peptidase M54 family. Monomer. Requires Zn(2+) as cofactor.

Its function is as follows. Probable zinc metalloprotease whose natural substrate is unknown. This Pyrococcus abyssi (strain GE5 / Orsay) protein is Archaemetzincin.